The chain runs to 476 residues: Bifunctional protein HldE (476 aa).

The ribokinase stretch occupies residues Met1–Thr318. Residue Asn195–Glu198 participates in ATP binding. Residue Asp264 is part of the active site. Residues Met344–Gly476 are cytidylyltransferase.

The protein in the N-terminal section; belongs to the carbohydrate kinase PfkB family. It in the C-terminal section; belongs to the cytidylyltransferase family. In terms of assembly, homodimer.

It carries out the reaction D-glycero-beta-D-manno-heptose 7-phosphate + ATP = D-glycero-beta-D-manno-heptose 1,7-bisphosphate + ADP + H(+). It catalyses the reaction D-glycero-beta-D-manno-heptose 1-phosphate + ATP + H(+) = ADP-D-glycero-beta-D-manno-heptose + diphosphate. It functions in the pathway nucleotide-sugar biosynthesis; ADP-L-glycero-beta-D-manno-heptose biosynthesis; ADP-L-glycero-beta-D-manno-heptose from D-glycero-beta-D-manno-heptose 7-phosphate: step 1/4. Its pathway is nucleotide-sugar biosynthesis; ADP-L-glycero-beta-D-manno-heptose biosynthesis; ADP-L-glycero-beta-D-manno-heptose from D-glycero-beta-D-manno-heptose 7-phosphate: step 3/4. Functionally, catalyzes the phosphorylation of D-glycero-D-manno-heptose 7-phosphate at the C-1 position to selectively form D-glycero-beta-D-manno-heptose-1,7-bisphosphate. In terms of biological role, catalyzes the ADP transfer from ATP to D-glycero-beta-D-manno-heptose 1-phosphate, yielding ADP-D-glycero-beta-D-manno-heptose. The protein is Bifunctional protein HldE of Yersinia pestis bv. Antiqua (strain Antiqua).